A 359-amino-acid chain; its full sequence is Phospho-N-acetylmuramoyl-pentapeptide-transferase (359 aa).

10 helical membrane-spanning segments follow: residues 3–23 (QILI…PVLI), 55–75 (VAIV…GVVI), 84–104 (GLLV…DDLI), 117–137 (TAKT…ALQF), 156–176 (IATV…VVSA), 190–210 (LAAG…FWQF), 231–251 (LAII…WNAA), 255–275 (IFMG…LSVT), 283–303 (VVLG…ILAF), and 330–350 (VIIR…ALFY).

The protein belongs to the glycosyltransferase 4 family. MraY subfamily. It depends on Mg(2+) as a cofactor.

The protein localises to the cell membrane. It carries out the reaction UDP-N-acetyl-alpha-D-muramoyl-L-alanyl-gamma-D-glutamyl-meso-2,6-diaminopimeloyl-D-alanyl-D-alanine + di-trans,octa-cis-undecaprenyl phosphate = di-trans,octa-cis-undecaprenyl diphospho-N-acetyl-alpha-D-muramoyl-L-alanyl-D-glutamyl-meso-2,6-diaminopimeloyl-D-alanyl-D-alanine + UMP. It functions in the pathway cell wall biogenesis; peptidoglycan biosynthesis. Its function is as follows. Catalyzes the initial step of the lipid cycle reactions in the biosynthesis of the cell wall peptidoglycan: transfers peptidoglycan precursor phospho-MurNAc-pentapeptide from UDP-MurNAc-pentapeptide onto the lipid carrier undecaprenyl phosphate, yielding undecaprenyl-pyrophosphoryl-MurNAc-pentapeptide, known as lipid I. In Mycolicibacterium vanbaalenii (strain DSM 7251 / JCM 13017 / BCRC 16820 / KCTC 9966 / NRRL B-24157 / PYR-1) (Mycobacterium vanbaalenii), this protein is Phospho-N-acetylmuramoyl-pentapeptide-transferase.